The primary structure comprises 218 residues: NAD(P)H-quinone oxidoreductase subunit I (218 aa).

2 4Fe-4S ferredoxin-type domains span residues 55–84 and 95–124; these read GRIHYEFDKCIACEVCVRVCPINLPVVDWV and RNYSIDFGVCIFCGNCVEYCPTNCLSMTEE. C64, C67, C70, C74, C104, C107, C110, and C114 together coordinate [4Fe-4S] cluster. Positions 168 to 218 are disordered; sequence EVQPHGVDPSRPRAGQRPDQVLSSLKQNAGGSAGNEGESATSTNTSKGSAE. A compositionally biased stretch (polar residues) spans 208 to 218; sequence TSTNTSKGSAE.

This sequence belongs to the complex I 23 kDa subunit family. NDH-1 is composed of at least 11 different subunits. It depends on [4Fe-4S] cluster as a cofactor.

Its subcellular location is the cellular thylakoid membrane. The enzyme catalyses a plastoquinone + NADH + (n+1) H(+)(in) = a plastoquinol + NAD(+) + n H(+)(out). It catalyses the reaction a plastoquinone + NADPH + (n+1) H(+)(in) = a plastoquinol + NADP(+) + n H(+)(out). Functionally, NDH-1 shuttles electrons from an unknown electron donor, via FMN and iron-sulfur (Fe-S) centers, to quinones in the respiratory and/or the photosynthetic chain. The immediate electron acceptor for the enzyme in this species is believed to be plastoquinone. Couples the redox reaction to proton translocation, and thus conserves the redox energy in a proton gradient. The polypeptide is NAD(P)H-quinone oxidoreductase subunit I (Synechococcus sp. (strain WH7803)).